The chain runs to 101 residues: Venom protein 214 (101 aa).

Residues 1–16 (MIRYVLVIITCFLVAA) form the signal peptide.

Post-translationally, contains 3 disulfide bonds. As to expression, expressed by the venom gland.

The protein resides in the secreted. In Lychas mucronatus (Chinese swimming scorpion), this protein is Venom protein 214.